A 61-amino-acid polypeptide reads, in one-letter code: Double gene block protein 1 (61 aa).

The disordered stretch occupies residues Leu15–Asn45. Residues Gly17 to Lys35 are RNA-binding. The span at Val28–Ala37 shows a compositional bias: basic and acidic residues.

This sequence belongs to the carmovirus double gene block protein 1 family. Homodimer.

Functionally, cell-to-cell movement. Displays RNA-binding activity. This is Double gene block protein 1 from Carnation mottle virus (isolate China/Shanghai) (CarMV).